Reading from the N-terminus, the 210-residue chain is Large ribosomal subunit protein uL3 (210 aa).

The protein belongs to the universal ribosomal protein uL3 family. In terms of assembly, part of the 50S ribosomal subunit. Forms a cluster with proteins L14 and L19.

Its function is as follows. One of the primary rRNA binding proteins, it binds directly near the 3'-end of the 23S rRNA, where it nucleates assembly of the 50S subunit. This chain is Large ribosomal subunit protein uL3, found in Caldicellulosiruptor saccharolyticus (strain ATCC 43494 / DSM 8903 / Tp8T 6331).